A 648-amino-acid chain; its full sequence is NADP-dependent malic enzyme, chloroplastic (648 aa).

A chloroplast-targeting transit peptide spans 1–61; sequence MISLNSSFLE…VDSAVRDVNA (61 aa). Y195 (proton donor) is an active-site residue. R248 is a binding site for NAD(+). Residue K266 is the Proton acceptor of the active site. Residues E339, D340, and D363 each coordinate a divalent metal cation. Position 363 (D363) interacts with NAD(+). 392–408 lines the NADP(+) pocket; it reads LFLGAGEAGTGIAELIA. Residue N504 coordinates NAD(+).

It belongs to the malic enzymes family. Homotetramer. Mg(2+) serves as cofactor. It depends on Mn(2+) as a cofactor.

It is found in the plastid. The protein resides in the chloroplast. The catalysed reaction is (S)-malate + NADP(+) = pyruvate + CO2 + NADPH. It catalyses the reaction oxaloacetate + H(+) = pyruvate + CO2. The protein operates within photosynthesis; C4 acid pathway. In terms of biological role, the chloroplastic ME isoform decarboxylates malate shuttled from neighboring mesophyll cells. The CO(2) released is then refixed by ribulose-bisphosphate carboxylase. This pathway eliminates the photorespiratory loss of CO(2) that occurs in most plants. This is NADP-dependent malic enzyme, chloroplastic (MOD1) from Flaveria trinervia (Clustered yellowtops).